The sequence spans 622 residues: Kinesin light chain 2 (622 aa).

Residues 78-143 (ILALSSHLGA…KQHLLFMSQI (66 aa)) adopt a coiled-coil conformation. The span at 145–164 (KLDEDASPNEEKGDVPKDTL) shows a compositional bias: basic and acidic residues. The segment at 145–191 (KLDEDASPNEEKGDVPKDTLDDLFPNEDEQSPAPSPGGGDVSGQHGG) is disordered. Phosphoserine occurs at positions 151, 175, and 179. Residues 180-190 (PGGGDVSGQHG) show a composition bias toward gly residues. TPR repeat units follow at residues 198–231 (LRTL…LEKT), 240–273 (ATML…REKT), 282–315 (AATL…REKV), 324–357 (AKQL…YATR), and 366–399 (AKTK…AHEK). Residue Ser445 is modified to Phosphoserine. A TPR 6 repeat occupies 449 to 482 (NTTLRSLGALYRRQGKLEAAHTLEDCASRNRKQG). Disordered stretches follow at residues 476-548 (SRNR…SFGK) and 563-622 (KLQG…SLVG). The span at 493 to 509 (ELLKDGSGRRGDRRSSR) shows a compositional bias: basic and acidic residues. Phosphoserine occurs at positions 508 and 521. Over residues 538–547 (GSLRRSGSFG) the composition is skewed to low complexity. 6 positions are modified to phosphoserine: Ser581, Ser582, Ser589, Ser608, Ser610, and Ser615. The segment covering 601–622 (LSDSRTLSSSSMDLSRRSSLVG) has biased composition (low complexity).

It belongs to the kinesin light chain family. As to quaternary structure, oligomeric complex composed of two heavy chains and two light chains. Interacts (via TPR repeats) with PLEKHM2.

Its subcellular location is the cytoplasm. The protein resides in the cytoskeleton. It localises to the lysosome membrane. In terms of biological role, kinesin is a microtubule-associated force-producing protein that plays a role in organelle transport. The light chain functions in coupling of cargo to the heavy chain or in the modulation of its ATPase activity. Through binding with PLEKHM2 and ARL8B, recruits kinesin-1 to lysosomes and hence direct lysosomes movement toward microtubule plus ends. In Homo sapiens (Human), this protein is Kinesin light chain 2.